The sequence spans 198 residues: Glycerol-3-phosphate acyltransferase (198 aa).

5 consecutive transmembrane segments (helical) span residues 1-21, 52-72, 81-101, 115-135, and 153-173; these read MILI…IPAA, GPAL…VGLA, WTAL…FLGF, LALD…CIWL, and LAAA…LAAL.

Belongs to the PlsY family. Probably interacts with PlsX.

The protein resides in the cell membrane. The enzyme catalyses an acyl phosphate + sn-glycerol 3-phosphate = a 1-acyl-sn-glycero-3-phosphate + phosphate. Its pathway is lipid metabolism; phospholipid metabolism. Functionally, catalyzes the transfer of an acyl group from acyl-phosphate (acyl-PO(4)) to glycerol-3-phosphate (G3P) to form lysophosphatidic acid (LPA). This enzyme utilizes acyl-phosphate as fatty acyl donor, but not acyl-CoA or acyl-ACP. The chain is Glycerol-3-phosphate acyltransferase from Deinococcus geothermalis (strain DSM 11300 / CIP 105573 / AG-3a).